Consider the following 299-residue polypeptide: 4-hydroxybenzoate octaprenyltransferase (299 aa).

7 consecutive transmembrane segments (helical) span residues 34–54 (IGSL…ADGL), 57–77 (LWTL…GCVI), 108–128 (LWVF…LNWL), 163–183 (WGIP…GWLL), 221–241 (FDLV…ALVD), 245–265 (DLGA…AYEF), and 277–297 (FRAF…IAVA).

The protein belongs to the UbiA prenyltransferase family. Mg(2+) is required as a cofactor.

It is found in the cell inner membrane. The enzyme catalyses all-trans-octaprenyl diphosphate + 4-hydroxybenzoate = 4-hydroxy-3-(all-trans-octaprenyl)benzoate + diphosphate. It participates in cofactor biosynthesis; ubiquinone biosynthesis. In terms of biological role, catalyzes the prenylation of para-hydroxybenzoate (PHB) with an all-trans polyprenyl group. Mediates the second step in the final reaction sequence of ubiquinone-8 (UQ-8) biosynthesis, which is the condensation of the polyisoprenoid side chain with PHB, generating the first membrane-bound Q intermediate 3-octaprenyl-4-hydroxybenzoate. This is 4-hydroxybenzoate octaprenyltransferase from Xanthomonas oryzae pv. oryzae (strain MAFF 311018).